The sequence spans 701 residues: MLTDLHKVRNIGIMAHIDAGKTTTTERHLFYTGVNHKLGETHDGGATTDWMEQEKERGITITSAAVTCFWNDHQINIIDNPGHVDFTVEVERSLRVLDGAVAVFDGKEGVEPQSETVWRQADKYDVPRICFVNKMDKLGADFYFTVDTIVKRLGARPLVMQLPIGAENDFVGVVDLISMKAFVWPGDANGIVTMGASYEIEIRQLQEKAEEEYRNELVEAVAETSEELMEKYLEGEELTVEEIQAGVRQLTVNAEAYPVFCGSAFKNRGVQPMLDAVVAYLPNPLDAGPVKGHAVNDEEVVLEREVSKEAPFSALAFKIATHPFFGTLTFIRVYSGRLESGAQVLNATKGKKERIGKLFQMHANKENPVDEVVAGHIYAVIGLKDTTTGDTLCDPANPIILESMTFPEPVISVAIEPKTKGDQEKLSTAIQKLVAEDPTFRVNLNEETGQTEIGGMGELHLDVFVDRMKREFKVEANVGKPQVAYRETIKRKVDKVDYTHKKQTGGSGQFAKVQLSFEPLDTPRGTVYEFENAITGGRVPREYIPSVDAGIQDAMKFGVLAGYPMVRVKATSLDGAYHDVDSSEMAFRIAGSQAFKEGVRKATPIILEPLMAVEVRTPEEFMGDVIGDLNSRRGQIQIQSMEDATGVKVVNALVPLSEMFGYIGDLRSKTQGRAVYSMTFHSYAEVPKAVADEIVQKSQGE.

Positions 6–285 (HKVRNIGIMA…AVVAYLPNPL (280 aa)) constitute a tr-type G domain. Residues 15–22 (AHIDAGKT), 79–83 (DNPGH), and 133–136 (NKMD) contribute to the GTP site.

The protein belongs to the TRAFAC class translation factor GTPase superfamily. Classic translation factor GTPase family. EF-G/EF-2 subfamily.

Its subcellular location is the cytoplasm. In terms of biological role, catalyzes the GTP-dependent ribosomal translocation step during translation elongation. During this step, the ribosome changes from the pre-translocational (PRE) to the post-translocational (POST) state as the newly formed A-site-bound peptidyl-tRNA and P-site-bound deacylated tRNA move to the P and E sites, respectively. Catalyzes the coordinated movement of the two tRNA molecules, the mRNA and conformational changes in the ribosome. The protein is Elongation factor G (fusA) of Micrococcus luteus (Micrococcus lysodeikticus).